The sequence spans 855 residues: Protein translocase subunit SecA (855 aa).

ATP is bound by residues Gln-85, 103 to 107, and Asp-492; that span reads GEGKT. A disordered region spans residues 794-845; the sequence is AAIHEESSSAAAPGPGQNQPGGPGGPSAGPVAPVRNLDKHGRNELCPCGSGK. Positions 801-811 are enriched in low complexity; the sequence is SSAAAPGPGQN. Zn(2+) contacts are provided by Cys-839, Cys-841, Cys-850, and Cys-851.

It belongs to the SecA family. Monomer and homodimer. Part of the essential Sec protein translocation apparatus which comprises SecA, SecYEG and auxiliary proteins SecDF. Other proteins may also be involved. Zn(2+) serves as cofactor.

The protein localises to the cell membrane. It is found in the cytoplasm. It catalyses the reaction ATP + H2O + cellular proteinSide 1 = ADP + phosphate + cellular proteinSide 2.. In terms of biological role, part of the Sec protein translocase complex. Interacts with the SecYEG preprotein conducting channel. Has a central role in coupling the hydrolysis of ATP to the transfer of proteins into and across the cell membrane, serving as an ATP-driven molecular motor driving the stepwise translocation of polypeptide chains across the membrane. In Clostridium beijerinckii (strain ATCC 51743 / NCIMB 8052) (Clostridium acetobutylicum), this protein is Protein translocase subunit SecA.